The chain runs to 176 residues: 3-hydroxyanthranilate 3,4-dioxygenase (176 aa).

An O2-binding site is contributed by arginine 44. Positions 48, 54, and 92 each coordinate Fe cation. Glutamate 54 contributes to the substrate binding site. Substrate contacts are provided by arginine 96 and glutamate 106. Residues cysteine 121, cysteine 124, cysteine 158, and cysteine 161 each contribute to the Fe cation site.

The protein belongs to the 3-HAO family. Homodimer. Fe(2+) serves as cofactor.

The enzyme catalyses 3-hydroxyanthranilate + O2 = (2Z,4Z)-2-amino-3-carboxymuconate 6-semialdehyde. It participates in cofactor biosynthesis; NAD(+) biosynthesis; quinolinate from L-kynurenine: step 3/3. In terms of biological role, catalyzes the oxidative ring opening of 3-hydroxyanthranilate to 2-amino-3-carboxymuconate semialdehyde, which spontaneously cyclizes to quinolinate. This Xanthomonas campestris pv. campestris (strain B100) protein is 3-hydroxyanthranilate 3,4-dioxygenase.